We begin with the raw amino-acid sequence, 317 residues long: Melanocyte-stimulating hormone receptor (317 aa).

The Extracellular segment spans residues 1–37 (MSVQGPQRRLLGSLNSTSPAAPRLGLAANQTGPRCLE). Residues N15 and N29 are each glycosylated (N-linked (GlcNAc...) asparagine). A helical membrane pass occupies residues 38–63 (VSVPDGLFLSLGLVSVVENVLVVAAI). The Cytoplasmic portion of the chain corresponds to 64–72 (AKNRNLHSP). A helical membrane pass occupies residues 73 to 93 (MYYFICCLAVSDLLVSVSSVL). The Extracellular portion of the chain corresponds to 94–118 (ETAVMLLLEAGTLAGRAAVVQQLDD). A helical transmembrane segment spans residues 119-140 (VIDVLVCGAMVSSLCFLGAIAV). The Cytoplasmic portion of the chain corresponds to 141 to 163 (DRYISIFYALRYHSIVTLPRAWR). Residues 164–183 (AISAIWVASVLSSTLFIAYY) form a helical membrane-spanning segment. Residues 184–191 (DHTAVLLC) lie on the Extracellular side of the membrane. The helical transmembrane segment at 192–211 (LVSFFVAMLVLMAVLYVHML) threads the bilayer. Residues 212–240 (ARACQHARGIARLHKRQRPVHQGLGLKGA) lie on the Cytoplasmic side of the membrane. A helical transmembrane segment spans residues 241–266 (ATLTILLGIFFLCWGPFFLHLSLMVL). Topologically, residues 267-279 (CPRHPICGCVFKN) are extracellular. A helical transmembrane segment spans residues 280–300 (FNLFLTLIICNSIVDPLIYAF). The Cytoplasmic segment spans residues 301–317 (RSQELRKTLQEVLLCSW). C315 carries the S-palmitoyl cysteine lipid modification.

It belongs to the G-protein coupled receptor 1 family. In terms of assembly, interacts with MGRN1, but does not undergo MGRN1-mediated ubiquitination; this interaction competes with GNAS-binding and thus inhibits agonist-induced cAMP production. Interacts with OPN3; the interaction results in a decrease in MC1R-mediated cAMP signaling and ultimately a decrease in melanin production in melanocytes.

Its subcellular location is the cell membrane. In terms of biological role, receptor for MSH (alpha, beta and gamma) and ACTH. The activity of this receptor is mediated by G proteins which activate adenylate cyclase. Mediates melanogenesis, the production of eumelanin (black/brown) and phaeomelanin (red/yellow), via regulation of cAMP signaling in melanocytes. The sequence is that of Melanocyte-stimulating hormone receptor (MC1R) from Panthera onca (Jaguar).